Here is a 203-residue protein sequence, read N- to C-terminus: Small ribosomal subunit protein uS4c (203 aa).

The tract at residues 17-39 (TLPGLTTKKSNKLNRPGKDGNTD) is disordered. An S4 RNA-binding domain is found at 92-164 (MRLDTLCFTL…IKNNQVREIP (73 aa)).

The protein belongs to the universal ribosomal protein uS4 family. In terms of assembly, part of the 30S ribosomal subunit. Contacts protein S5. The interaction surface between S4 and S5 is involved in control of translational fidelity.

Its subcellular location is the plastid. It localises to the chloroplast. One of the primary rRNA binding proteins, it binds directly to 16S rRNA where it nucleates assembly of the body of the 30S subunit. Its function is as follows. With S5 and S12 plays an important role in translational accuracy. This Phaeodactylum tricornutum (strain CCAP 1055/1) protein is Small ribosomal subunit protein uS4c (rps4).